The primary structure comprises 120 residues: Cu-Zn superoxide dismutase-like protein OPG175 (120 aa).

A disulfide bridge connects residues C52 and C102.

Belongs to the Cu-Zn superoxide dismutase family.

The protein resides in the virion. Its subcellular location is the host cytoplasm. Superoxide dismutase-like protein with no enzymatic activity. The protein is Cu-Zn superoxide dismutase-like protein OPG175 (OPG175) of Vaccinia virus (strain Tashkent) (VACV).